A 375-amino-acid polypeptide reads, in one-letter code: Queuine tRNA-ribosyltransferase (375 aa).

D90 acts as the Proton acceptor in catalysis. Residues 90 to 94, D144, Q193, and G220 contribute to the substrate site; that span reads DSGGF. An RNA binding region spans residues 251-257; it reads GVGTPED. D270 acts as the Nucleophile in catalysis. Residues 275 to 279 are RNA binding; important for wobble base 34 recognition; sequence TRNAR. The Zn(2+) site is built by C308, C310, C313, and H339.

Belongs to the queuine tRNA-ribosyltransferase family. As to quaternary structure, homodimer. Within each dimer, one monomer is responsible for RNA recognition and catalysis, while the other monomer binds to the replacement base PreQ1. The cofactor is Zn(2+).

It catalyses the reaction 7-aminomethyl-7-carbaguanine + guanosine(34) in tRNA = 7-aminomethyl-7-carbaguanosine(34) in tRNA + guanine. It participates in tRNA modification; tRNA-queuosine biosynthesis. Its function is as follows. Catalyzes the base-exchange of a guanine (G) residue with the queuine precursor 7-aminomethyl-7-deazaguanine (PreQ1) at position 34 (anticodon wobble position) in tRNAs with GU(N) anticodons (tRNA-Asp, -Asn, -His and -Tyr). Catalysis occurs through a double-displacement mechanism. The nucleophile active site attacks the C1' of nucleotide 34 to detach the guanine base from the RNA, forming a covalent enzyme-RNA intermediate. The proton acceptor active site deprotonates the incoming PreQ1, allowing a nucleophilic attack on the C1' of the ribose to form the product. After dissociation, two additional enzymatic reactions on the tRNA convert PreQ1 to queuine (Q), resulting in the hypermodified nucleoside queuosine (7-(((4,5-cis-dihydroxy-2-cyclopenten-1-yl)amino)methyl)-7-deazaguanosine). The protein is Queuine tRNA-ribosyltransferase of Herminiimonas arsenicoxydans.